Consider the following 314-residue polypeptide: MIEIEKPKIETIEISDDAKYGKFVVEPLERGYGTTLGNSLRRILLSSLPGAAVTSIQIDGALHEFSVIEGVVEDVTTMILNIKKLALKIYSDEEKTLEIDMQGPGVVTAADINYDSDVEILNPDLHIATLSDNAKFHVRLNATRGRGYTPADQNKRENMPIGVLPVDSIFSPVIRVNYQVENTRVGQSTNYDKLTFDVLTDGSISPEEAVSLGAKILSEHLSIFVNLTDEAQKAEIMIEKEESHKEKVLEMTIEELDLSVRSYNCLKRAGINTVQELADKSEDDMMKVRNLGRKSLEEVKVKLADLGLSLRNEN.

The alpha N-terminal domain (alpha-NTD) stretch occupies residues M1–T228. The segment at K245–N314 is alpha C-terminal domain (alpha-CTD).

The protein belongs to the RNA polymerase alpha chain family. In terms of assembly, homodimer. The RNAP catalytic core consists of 2 alpha, 1 beta, 1 beta' and 1 omega subunit. When a sigma factor is associated with the core the holoenzyme is formed, which can initiate transcription.

It carries out the reaction RNA(n) + a ribonucleoside 5'-triphosphate = RNA(n+1) + diphosphate. DNA-dependent RNA polymerase catalyzes the transcription of DNA into RNA using the four ribonucleoside triphosphates as substrates. The sequence is that of DNA-directed RNA polymerase subunit alpha from Listeria innocua serovar 6a (strain ATCC BAA-680 / CLIP 11262).